The sequence spans 307 residues: Thiohydrolase apmlB (307 aa).

Belongs to the polyketide transferase af380 family.

Thiohydrolase; part of the gene cluster that mediates the biosynthesis of phaeospelide A, a fungal polyene macrolide with a 34-membered macrolactone ring and an all-trans conjugated hexaene structure. The HR-PKS ApmlA uses acetyl-CoA and malonyl-CoA as its starter and extender units, respectively, and provides the large carbon framework in phaeospelide via 16 cycles of polyketide chain elongation, which is the largest number identified in fungal iterative PKSs thus far. During round 1, the KR domain reduces beta -ketone to an L-oriented hydroxy group, while during later rounds, it provides hydroxy groups in the D-configuration. The characteristic conjugated hexaene moiety is built during the later rounds (10-15), when the KR and DH domains are at work but ER is off. Phylogenetic analysis of the DH domain suggests that a polyene formation is programmed in the DH domain. Finally, the mature ACP-tethered carbon chain is transferred to the serine residue of the thiohydrolase apmlB, followed by intramolecular macrolactonization, generating phaeospelide A. When one elongation cycle during rounds 7-9 is skipped, phaeospelide B is biosynthesized instead. This is Thiohydrolase apmlB from Arthrinium phaeospermum (Gymnosporium phaeospermum).